Here is a 209-residue protein sequence, read N- to C-terminus: A-type ATP synthase subunit D (209 aa).

This sequence belongs to the V-ATPase D subunit family. Has multiple subunits with at least A(3), B(3), C, D, E, F, H, I and proteolipid K(x).

The protein resides in the cell membrane. Component of the A-type ATP synthase that produces ATP from ADP in the presence of a proton gradient across the membrane. The chain is A-type ATP synthase subunit D from Archaeoglobus fulgidus (strain ATCC 49558 / DSM 4304 / JCM 9628 / NBRC 100126 / VC-16).